Reading from the N-terminus, the 817-residue chain is LPS-assembly protein LptD (817 aa).

A signal peptide spans 1-26 (MPALVVSPDLVRGAAGASAAPTPAPA). The interval 1 to 101 (MPALVVSPDL…ARKPGSTEVR (101 aa)) is disordered. A compositionally biased stretch (low complexity) spans 13-90 (GAAGASAAPT…PAASASPADA (78 aa)).

It belongs to the LptD family. Component of the lipopolysaccharide transport and assembly complex. Interacts with LptE and LptA.

The protein resides in the cell outer membrane. Its function is as follows. Together with LptE, is involved in the assembly of lipopolysaccharide (LPS) at the surface of the outer membrane. The sequence is that of LPS-assembly protein LptD from Azoarcus sp. (strain BH72).